Consider the following 1170-residue polypeptide: Structural maintenance of chromosomes protein 2 (1170 aa).

32–39 (GLNGSGKS) is an ATP binding site. Residues 172–469 (KMFEDRREKA…DKLRARLVEY (298 aa)) adopt a coiled-coil conformation. An SMC hinge domain is found at 523 to 641 (VHGVVGQLFQ…CEDPETAKKI (119 aa)). Residues 678–1027 (VDIQKYNQIQ…ISKLNEYKRE (350 aa)) adopt a coiled-coil conformation.

The protein belongs to the SMC family. SMC2 subfamily. Forms a heterodimer with SMC4. Component of the condensin complex, which contains the SMC2 and SMC4 heterodimer, and three non SMC subunits that probably regulate the complex: BRN1, YCS4 and YCG1/YCS5.

The protein resides in the nucleus. It is found in the cytoplasm. Its subcellular location is the chromosome. Functionally, central component of the condensin complex, a complex required for conversion of interphase chromatin into mitotic-like condense chromosomes. The condensin complex probably introduces positive supercoils into relaxed DNA in the presence of type I topoisomerases and converts nicked DNA into positive knotted forms in the presence of type II topoisomerases. This is Structural maintenance of chromosomes protein 2 (SMC2) from Saccharomyces cerevisiae (strain ATCC 204508 / S288c) (Baker's yeast).